Consider the following 286-residue polypeptide: MSQTNDKPALHLVPSFYGVYILKSIPKPRRTYIGSTPDPKRRLRQHNGDLKVGGAYRTKKDGSRPWTMVVLVHGFPSRIAALQFEHSLQHAYQTRHINNDARITSSSRQSSMHSKLANIRLLTTSFDKMSLKIAIFDEEVYRMWVENKHKIECNVPCTLFKFDEFCNSIQEIDIEDAKNILLGKQLDCMVCKASIDYFKDSTPNISSREELSNYLAKGNYPLIGICGDHAFHLSCIARQRGPAMVPKSVTCTTCGQKLDWSDIIKVSTRLRHYVVQDSLHLAITQL.

The GIY-YIG domain maps to 15–98 (SFYGVYILKS…QHAYQTRHIN (84 aa)).

It belongs to the SLX1 family. In terms of assembly, forms a heterodimer with SLX4. A divalent metal cation is required as a cofactor.

It localises to the nucleus. Its function is as follows. Catalytic subunit of the SLX1-SLX4 structure-specific endonuclease that resolves DNA secondary structures generated during DNA repair and recombination. Has endonuclease activity towards branched DNA substrates, introducing single-strand cuts in duplex DNA close to junctions with ss-DNA. The chain is Structure-specific endonuclease subunit SLX1 from Candida dubliniensis (strain CD36 / ATCC MYA-646 / CBS 7987 / NCPF 3949 / NRRL Y-17841) (Yeast).